The chain runs to 907 residues: Glutamate receptor 1 (907 aa).

The signal sequence occupies residues 1-18 (MPYIFAFFCTGFLGAVVG). The Extracellular segment spans residues 19–536 (ANFPNNIQIG…GVFSFLDPLA (518 aa)). Residues Asn63, Asn249, Asn257, Asn363, Asn401, and Asn406 are each glycosylated (N-linked (GlcNAc...) asparagine). A disulfide bridge connects residues Cys75 and Cys323. L-glutamate contacts are provided by Pro492, Thr494, and Arg499. The helical transmembrane segment at 537–557 (YEIWMCIVFAYIGVSVVLFLV) threads the bilayer. Residues 558 to 584 (SRFSPYEWHSEEFEEGRDQTTSDQSNE) are Cytoplasmic-facing. Positions 585-600 (FGIFNSLWFSLGAFMQ) form an intramembrane region, helical; Pore-forming. The stretch at 601–603 (QGC) is an intramembrane region. Residue Cys603 is the site of S-palmitoyl cysteine attachment. The Cytoplasmic segment spans residues 604–609 (DISPRS). A helical membrane pass occupies residues 610–630 (LSGRIVGGVWWFFTLIIISSY). Topologically, residues 631 to 805 (TANLAAFLTV…DKTSALSLSN (175 aa)) are extracellular. Ser645 is modified (phosphoserine). L-glutamate is bound by residues Ser668 and Thr669. Ser710 is subject to Phosphoserine. Glu719 lines the L-glutamate pocket. An intrachain disulfide couples Cys732 to Cys787. Residues 806–826 (VAGVFYILIGGLGLAMLVALI) form a helical membrane-spanning segment. Over 827-907 (EFCYKSRSES…SGMPLGATGL (81 aa)) the chain is Cytoplasmic. A lipid anchor (S-palmitoyl cysteine) is attached at Cys829. Phosphoserine occurs at positions 849 and 863. A disordered region spans residues 857-881 (STLPRNSGAGASGGSGSGENGRVVS). The span at 866–875 (GASGGSGSGE) shows a compositional bias: gly residues. The short motif at 904-907 (ATGL) is the PDZ-binding element.

It belongs to the glutamate-gated ion channel (TC 1.A.10.1) family. GRIA1 subfamily. As to quaternary structure, homotetramer or heterotetramer of pore-forming glutamate receptor subunits. Heteromeric assembly can be the result of both receptor subtype and flip or flop form and according the composition, one partner can be dominant with respect to the fast desensitizing current component, whereas the other can determine the steady-state component. Tetramers may be formed by the dimerization of dimers. Found in a complex with GRIA2, GRIA3, GRIA4, CNIH2, CNIH3, CACNG2, CACNG3, CACNG4, CACNG5, CACNG7 and CACNG8. Interacts with HIP1 and RASGRF2. Interacts with SYNDIG1 and GRIA2. Interacts with DLG1 (via C-terminus). Interacts with LRFN1. Interacts with PRKG2. Interacts with CNIH2 and CACNG2. Interacts with CACNG5; this interaction modulates the gating. Interacts (via C-terminus) with PDLIM4 (via LIM domain); this interaction as well as the interaction of PDLIM4 with alpha-actinin is required for their colocalization in early endosomes. Interacts with SNX27 (via PDZ domain); the interaction is required for recycling to the plasma membrane when endocytosed and prevent degradation in lysosomes. Interacts (via PDZ-binding motif) with SHANK3 (via PDZ domain). Interacts with CACNG3; associates GRIA1 with the adapter protein complex 4 (AP-4) to target GRIA1 to the somatodendritic compartment of neurons. Interacts with CACNG2; this interaction mediates traffick to the plasma membrane and modulation of desensitization. Interacts with CNIH2 and CNIH3; this interaction promotes expression at the plasma membrane and extensively modulates their gating properties by slowing deactivation and desensitization kinetics. Found in a complex with GRIA2, GRIA3, GRIA4, DLG4, CACNG8 and CNIH2. Phosphorylated at Ser-645. Phosphorylated at Ser-710 by PKC. Phosphorylated at Ser-849 by PKC, PKA and CAMK2. Phosphorylated at Ser-863 by PKC, PKA and PRKG2. Phosphorylation of Ser-863 is reduced by induction of long-term depression and increased by induction of long-term potentiation. Post-translationally, palmitoylated. Depalmitoylated by CPT1C and upon L-glutamate stimulation. ZDHHC3/GODZ specifically palmitoylates Cys-603, which leads to Golgi retention and decreased cell surface expression. In contrast, Cys-829 palmitoylation does not affect cell surface expression but regulates stimulation-dependent endocytosis. Expressed in the outer plexiform layer of the retina of the eye (at protein level). Expressed in the forebrain and hippocampus (at protein level).

It is found in the cell membrane. Its subcellular location is the endoplasmic reticulum membrane. The protein localises to the postsynaptic cell membrane. It localises to the postsynaptic density membrane. The protein resides in the cell projection. It is found in the dendrite. Its subcellular location is the dendritic spine. The protein localises to the early endosome membrane. It localises to the recycling endosome membrane. The protein resides in the presynapse. It is found in the synapse. It catalyses the reaction Ca(2+)(in) = Ca(2+)(out). It carries out the reaction Na(+)(in) = Na(+)(out). The enzyme catalyses Mg(2+)(in) = Mg(2+)(out). The catalysed reaction is Li(+)(in) = Li(+)(out). It catalyses the reaction K(+)(in) = K(+)(out). It carries out the reaction Sr(2+)(in) = Sr(2+)(out). Ionotropic glutamate receptor that functions as a ligand-gated cation channel, gated by L-glutamate and glutamatergic agonists such as alpha-amino-3-hydroxy-5-methyl-4-isoxazolepropionic acid (AMPA), quisqualic acid, and kainic acid. L-glutamate acts as an excitatory neurotransmitter at many synapses in the central nervous system. Binding of the excitatory neurotransmitter L-glutamate induces a conformation change, leading to the opening of the cation channel, and thereby converts the chemical signal to an electrical impulse upon entry of monovalent and divalent cations such as sodium and calcium. The receptor then desensitizes rapidly and enters in a transient inactive state, characterized by the presence of bound agonist. In the presence of CACNG2 or CACNG4 or CACNG7 or CACNG8, shows resensitization which is characterized by a delayed accumulation of current flux upon continued application of L-glutamate. Calcium (Ca(2+)) permeability depends on subunits composition and, heteromeric channels containing edited GRIA2 subunit are calcium-impermeable. Also permeable to other divalents cations such as strontium(2+) and magnesium(2+) and monovalent cations such as potassium(1+) and lithium(1+). This is Glutamate receptor 1 from Mus musculus (Mouse).